Consider the following 727-residue polypeptide: Malate synthase G (727 aa).

Acetyl-CoA is bound by residues Val117, 124–125 (RY), Ser275, and Arg312. The Proton acceptor role is filled by Arg339. Residues Arg339, Glu431, and 456-459 (GFLD) contribute to the glyoxylate site. Positions 431 and 459 each coordinate Mg(2+). Pro540 is a binding site for acetyl-CoA. Cys616 is subject to Cysteine sulfenic acid (-SOH). Asp630 serves as the catalytic Proton donor.

This sequence belongs to the malate synthase family. GlcB subfamily. Monomer. The cofactor is Mg(2+).

The protein resides in the cytoplasm. It catalyses the reaction glyoxylate + acetyl-CoA + H2O = (S)-malate + CoA + H(+). It participates in carbohydrate metabolism; glyoxylate cycle; (S)-malate from isocitrate: step 2/2. In terms of biological role, involved in the glycolate utilization. Catalyzes the condensation and subsequent hydrolysis of acetyl-coenzyme A (acetyl-CoA) and glyoxylate to form malate and CoA. This Halalkalibacterium halodurans (strain ATCC BAA-125 / DSM 18197 / FERM 7344 / JCM 9153 / C-125) (Bacillus halodurans) protein is Malate synthase G.